Here is a 1109-residue protein sequence, read N- to C-terminus: Carbamoyl phosphate synthase large chain (1109 aa).

Positions 1–402 (MPRRTDLTSV…ALQKAMRSID (402 aa)) are carboxyphosphate synthetic domain. The ATP site is built by Arg129, Arg169, Gly175, Gly176, Glu208, Ile210, Glu215, Gly241, Val242, His243, Gln285, and Glu299. An ATP-grasp 1 domain is found at 133-328 (KGVVERCGAE…IAKIAARLAV (196 aa)). Positions 285, 299, and 301 each coordinate Mg(2+). 3 residues coordinate Mn(2+): Gln285, Glu299, and Asn301. An oligomerization domain region spans residues 403–548 (KAGSTFHWRG…YHYSSYDAET (146 aa)). The carbamoyl phosphate synthetic domain stretch occupies residues 549-956 (EVQPRDRPAV…AFAKSQAAAY (408 aa)). The region spanning 678–876 (GEVLVAAGLP…LAKAASLLMA (199 aa)) is the ATP-grasp 2 domain. Arg714, Arg760, Leu762, Glu767, Gly792, Ile793, His794, Ser795, Gln835, and Glu847 together coordinate ATP. Mg(2+) is bound by residues Gln835, Glu847, and Asn849. Gln835, Glu847, and Asn849 together coordinate Mn(2+). In terms of domain architecture, MGS-like spans 957-1102 (GGLPTSGRVF…QEHDAARAAR (146 aa)). An allosteric domain region spans residues 957-1109 (GGLPTSGRVF…AARETEGVHA (153 aa)).

The protein belongs to the CarB family. In terms of assembly, composed of two chains; the small (or glutamine) chain promotes the hydrolysis of glutamine to ammonia, which is used by the large (or ammonia) chain to synthesize carbamoyl phosphate. Tetramer of heterodimers (alpha,beta)4. It depends on Mg(2+) as a cofactor. The cofactor is Mn(2+).

It carries out the reaction hydrogencarbonate + L-glutamine + 2 ATP + H2O = carbamoyl phosphate + L-glutamate + 2 ADP + phosphate + 2 H(+). It catalyses the reaction hydrogencarbonate + NH4(+) + 2 ATP = carbamoyl phosphate + 2 ADP + phosphate + 2 H(+). The protein operates within amino-acid biosynthesis; L-arginine biosynthesis; carbamoyl phosphate from bicarbonate: step 1/1. Its pathway is pyrimidine metabolism; UMP biosynthesis via de novo pathway; (S)-dihydroorotate from bicarbonate: step 1/3. Its function is as follows. Large subunit of the glutamine-dependent carbamoyl phosphate synthetase (CPSase). CPSase catalyzes the formation of carbamoyl phosphate from the ammonia moiety of glutamine, carbonate, and phosphate donated by ATP, constituting the first step of 2 biosynthetic pathways, one leading to arginine and/or urea and the other to pyrimidine nucleotides. The large subunit (synthetase) binds the substrates ammonia (free or transferred from glutamine from the small subunit), hydrogencarbonate and ATP and carries out an ATP-coupled ligase reaction, activating hydrogencarbonate by forming carboxy phosphate which reacts with ammonia to form carbamoyl phosphate. The protein is Carbamoyl phosphate synthase large chain of Beutenbergia cavernae (strain ATCC BAA-8 / DSM 12333 / CCUG 43141 / JCM 11478 / NBRC 16432 / NCIMB 13614 / HKI 0122).